The chain runs to 124 residues: Small ribosomal subunit protein uS12 (124 aa).

A disordered region spans residues 1–32 (MPTISQLIRHGRQKQKKRTKSPALKSSPQRRG). Residues 9–20 (RHGRQKQKKRTK) are compositionally biased toward basic residues. Residue D89 is modified to 3-methylthioaspartic acid.

This sequence belongs to the universal ribosomal protein uS12 family. In terms of assembly, part of the 30S ribosomal subunit. Contacts proteins S8 and S17. May interact with IF1 in the 30S initiation complex.

In terms of biological role, with S4 and S5 plays an important role in translational accuracy. Functionally, interacts with and stabilizes bases of the 16S rRNA that are involved in tRNA selection in the A site and with the mRNA backbone. Located at the interface of the 30S and 50S subunits, it traverses the body of the 30S subunit contacting proteins on the other side and probably holding the rRNA structure together. The combined cluster of proteins S8, S12 and S17 appears to hold together the shoulder and platform of the 30S subunit. This chain is Small ribosomal subunit protein uS12, found in Leptospira borgpetersenii serovar Hardjo-bovis (strain JB197).